We begin with the raw amino-acid sequence, 289 residues long: Polyketide biosynthesis malonyl CoA-acyl carrier protein transacylase BaeC (289 aa).

Active-site residues include S87 and H193.

Belongs to the FabD family.

The protein localises to the cytoplasm. The catalysed reaction is holo-[ACP] + malonyl-CoA = malonyl-[ACP] + CoA. Its pathway is antibiotic biosynthesis; bacillaene biosynthesis. Its function is as follows. Involved in some intermediate steps for the synthesis of the antibiotic polyketide bacillaene which is involved in secondary metabolism. It catalyzes the transfer of the malonyl-CoA group to the acyl-carrier-protein AcpK (Mal-AcpK). The protein is Polyketide biosynthesis malonyl CoA-acyl carrier protein transacylase BaeC (baeC) of Bacillus velezensis (strain DSM 23117 / BGSC 10A6 / LMG 26770 / FZB42) (Bacillus amyloliquefaciens subsp. plantarum).